The chain runs to 153 residues: Holo-[acyl-carrier-protein] synthase (153 aa).

Residues aspartate 24 and glutamate 78 each contribute to the Mg(2+) site.

This sequence belongs to the P-Pant transferase superfamily. AcpS family. Mg(2+) is required as a cofactor.

Its subcellular location is the cytoplasm. The catalysed reaction is apo-[ACP] + CoA = holo-[ACP] + adenosine 3',5'-bisphosphate + H(+). In terms of biological role, transfers the 4'-phosphopantetheine moiety from coenzyme A to a Ser of acyl-carrier-protein. The sequence is that of Holo-[acyl-carrier-protein] synthase from Bordetella pertussis (strain Tohama I / ATCC BAA-589 / NCTC 13251).